The following is a 484-amino-acid chain: Probable glycine dehydrogenase (decarboxylating) subunit 2 (484 aa).

Position 264 is an N6-(pyridoxal phosphate)lysine (K264).

This sequence belongs to the GcvP family. C-terminal subunit subfamily. In terms of assembly, the glycine cleavage system is composed of four proteins: P, T, L and H. In this organism, the P 'protein' is a heterodimer of two subunits. Requires pyridoxal 5'-phosphate as cofactor.

It catalyses the reaction N(6)-[(R)-lipoyl]-L-lysyl-[glycine-cleavage complex H protein] + glycine + H(+) = N(6)-[(R)-S(8)-aminomethyldihydrolipoyl]-L-lysyl-[glycine-cleavage complex H protein] + CO2. Functionally, the glycine cleavage system catalyzes the degradation of glycine. The P protein binds the alpha-amino group of glycine through its pyridoxal phosphate cofactor; CO(2) is released and the remaining methylamine moiety is then transferred to the lipoamide cofactor of the H protein. The protein is Probable glycine dehydrogenase (decarboxylating) subunit 2 of Legionella pneumophila (strain Paris).